The following is a 341-amino-acid chain: Phenylalanine--tRNA ligase alpha subunit (341 aa).

Glu254 serves as a coordination point for Mg(2+).

The protein belongs to the class-II aminoacyl-tRNA synthetase family. Phe-tRNA synthetase alpha subunit type 1 subfamily. As to quaternary structure, tetramer of two alpha and two beta subunits. Mg(2+) is required as a cofactor.

The protein resides in the cytoplasm. It catalyses the reaction tRNA(Phe) + L-phenylalanine + ATP = L-phenylalanyl-tRNA(Phe) + AMP + diphosphate + H(+). This Mycoplasma pneumoniae (strain ATCC 29342 / M129 / Subtype 1) (Mycoplasmoides pneumoniae) protein is Phenylalanine--tRNA ligase alpha subunit (pheS).